The primary structure comprises 603 residues: Sulfoacetaldehyde acetyltransferase (603 aa).

Belongs to the TPP enzyme family. Mg(2+) serves as cofactor. Thiamine diphosphate is required as a cofactor.

The catalysed reaction is acetyl phosphate + sulfite + H(+) = sulfoacetaldehyde + phosphate. Catalyzes the degradation of sulfoacetaldehyde into sulfite and acetyl phosphate. Involved in sulfolactate degradation. This is Sulfoacetaldehyde acetyltransferase from Roseovarius nubinhibens (strain ATCC BAA-591 / DSM 15170 / ISM).